The following is a 385-amino-acid chain: A-type ATP synthase subunit C (385 aa).

The protein belongs to the V-ATPase V0D/AC39 subunit family. In terms of assembly, has multiple subunits with at least A(3), B(3), C, D, E, F, H, I and proteolipid K(x).

It localises to the cell membrane. Component of the A-type ATP synthase that produces ATP from ADP in the presence of a proton gradient across the membrane. This chain is A-type ATP synthase subunit C, found in Methanosphaera stadtmanae (strain ATCC 43021 / DSM 3091 / JCM 11832 / MCB-3).